Reading from the N-terminus, the 95-residue chain is Small ribosomal subunit protein uS17 (95 aa).

It belongs to the universal ribosomal protein uS17 family. In terms of assembly, part of the 30S ribosomal subunit.

In terms of biological role, one of the primary rRNA binding proteins, it binds specifically to the 5'-end of 16S ribosomal RNA. This Mycoplasmopsis synoviae (strain 53) (Mycoplasma synoviae) protein is Small ribosomal subunit protein uS17.